The sequence spans 880 residues: MTERKKLVLVDGNSLAYRAFFALPLLSNDKGVHTNAVYGFAMILMKMLEDEKPTHMLVAFDAGKTTFRHGTFKEYKGGRQKTPPELSEQMPFIRELLDAYQISRYELEQYEADDIIGTLAKSAEKDGFEVKVFSGDKDLTQLATDKTTVAITRKGITDVEFYTPEHVKEKYGLTPEQIIDMKGLMGDSSDNIPGVPGVGEKTAIKLLKQFDSVEKLLESIDEVSGKKLKEKLEEFKDQALMSKELATIMTDAPIEVSVSGLEYQGFNREQVIAIFKDLGFNTLLERLGEDSAEAEQDQSLEDINVKTVTDVTSDILVSPSAFVVEQIGDNYHEEPILGFSIVNETGAYFIPKDIAVESEVFKEWVENDEQKKWVFDSKRAVVALRWQGIELKGAEFDTLLAAYIINPGNSYDDVASVAKDYGLHIVSSDESVYGKGAKRAVPSEDVLSEHLGRKALAIQSLREKLVQELENNDQLELFEELEMPLALILGEMESTGVKVDVDRLKRMGEELGAKLKEYEEKIHEIAGEPFNINSPKQLGVILFEKIGLPVVKKTKTGYSTSADVLEKLADKHDIVDYILQYRQIGKLQSTYIEGLLKVTRPDSHKVHTRFNQALTQTGRLSSTDPNLQNIPIRLEEGRKIRQAFVPSEKDWLIFAADYSQIELRVLAHISKDENLIEAFTNDMDIHTKTAMDVFHVAKDEVTSAMRRQAKAVNFGIVYGISDYGLSQNLGITRKEAGAFIDRYLESFQGVKAYMEDSVQEAKQKGYVTTLMHRRRYIPELTSRNFNIRSFAERTAMNTPIQGSAADIIKKAMIDMAAKLKEKQLKARLLLQVHDELIFEAPKEEIEILEKLVPEVMEHALALDVPLKVDFASGPSWYDAK.

Residues 174-268 (TPEQIIDMKG…SGLEYQGFNR (95 aa)) form the 5'-3' exonuclease domain. The 3'-5' exonuclease domain occupies 302 to 470 (DINVKTVTDV…LREKLVQELE (169 aa)).

Belongs to the DNA polymerase type-A family. Single-chain monomer with multiple functions.

The catalysed reaction is DNA(n) + a 2'-deoxyribonucleoside 5'-triphosphate = DNA(n+1) + diphosphate. In terms of biological role, in addition to polymerase activity, this DNA polymerase exhibits 3'-5' and 5'-3' exonuclease activity. This is DNA polymerase I (polA) from Bacillus subtilis (strain 168).